We begin with the raw amino-acid sequence, 355 residues long: Sorbitol dehydrogenase (355 aa).

Residue alanine 2 is modified to N-acetylalanine. Cysteine 43 lines the Zn(2+) pocket. Tyrosine 49 contacts substrate. Residues histidine 68 and glutamate 69 each coordinate Zn(2+). A substrate-binding site is contributed by glutamate 154. NAD(+) contacts are provided by residues isoleucine 182, aspartate 202, arginine 207, 271-273, and 295-297; these read VGL and IFR. Positions 297 and 298 each coordinate substrate.

The protein belongs to the zinc-containing alcohol dehydrogenase family. In terms of assembly, homotetramer. Requires Zn(2+) as cofactor. Expressed in liver.

It is found in the mitochondrion membrane. The protein resides in the cell projection. It localises to the cilium. The protein localises to the flagellum. It catalyses the reaction keto-D-fructose + NADH + H(+) = D-sorbitol + NAD(+). Functionally, polyol dehydrogenase that catalyzes the reversible NAD(+)-dependent oxidation of various sugar alcohols. Is active with D-sorbitol (D-glucitol) as substrate, leading to the C2-oxidized product D-fructose. Is a key enzyme in the polyol pathway that interconverts glucose and fructose via sorbitol, which constitutes an important alternate route for glucose metabolism. The sequence is that of Sorbitol dehydrogenase (SORD) from Gallus gallus (Chicken).